The following is a 283-amino-acid chain: Urease accessory protein UreD (283 aa).

The interval M1 to Q20 is disordered.

Belongs to the UreD family. UreD, UreF and UreG form a complex that acts as a GTP-hydrolysis-dependent molecular chaperone, activating the urease apoprotein by helping to assemble the nickel containing metallocenter of UreC. The UreE protein probably delivers the nickel.

Its subcellular location is the cytoplasm. Its function is as follows. Required for maturation of urease via the functional incorporation of the urease nickel metallocenter. The sequence is that of Urease accessory protein UreD from Corynebacterium glutamicum (strain R).